Consider the following 278-residue polypeptide: Serine protease 57 (278 aa).

A signal peptide spans 1–31 (MVPGTGGGRDCLTLVVATALTQLLWLPGCCG). The 230-residue stretch at 34-263 (IVGGHEVKPH…FVSWIWDVVR (230 aa)) folds into the Peptidase S1 domain. Cys59 and Cys75 are joined by a disulfide. Catalysis depends on charge relay system residues His74 and Asp122. Asn129 carries an N-linked (GlcNAc...) asparagine glycan. 3 disulfides stabilise this stretch: Cys157–Cys224, Cys188–Cys202, and Cys214–Cys239. Catalysis depends on Ser218, which acts as the Charge relay system.

This sequence belongs to the peptidase S1 family. After cleavage of the signal peptide, the N-terminus is probably further processed by CTSC. Processing by CTSC is probably required for accumulation in cytoplasmic granules; in the absence of CTSC the protein does not accumulate. In terms of processing, N-glycosylated.

It localises to the cytoplasmic granule lumen. The protein localises to the secreted. Serine protease that cleaves preferentially after Arg residues. Can also cleave after citrulline (deimidated arginine) and methylarginine residues. In Rattus norvegicus (Rat), this protein is Serine protease 57 (Prss57).